Consider the following 489-residue polypeptide: Phosphoglucosamine mutase (489 aa).

Serine 136 functions as the Phosphoserine intermediate in the catalytic mechanism. The Mg(2+) site is built by serine 136, aspartate 275, aspartate 277, and aspartate 279. Serine 136 carries the post-translational modification Phosphoserine.

The protein belongs to the phosphohexose mutase family. Mg(2+) serves as cofactor. Post-translationally, activated by phosphorylation.

It catalyses the reaction alpha-D-glucosamine 1-phosphate = D-glucosamine 6-phosphate. In terms of biological role, catalyzes the conversion of glucosamine-6-phosphate to glucosamine-1-phosphate. The sequence is that of Phosphoglucosamine mutase from Trichodesmium erythraeum (strain IMS101).